A 36-amino-acid chain; its full sequence is Pancreatic polypeptide (36 aa).

At Y36 the chain carries Tyrosine amide.

This sequence belongs to the NPY family.

The protein resides in the secreted. Its function is as follows. Hormone secreted by pancreatic cells that acts as a regulator of pancreatic and gastrointestinal functions probably by signaling through the G protein-coupled receptor NPY4R2. In Ceratotherium simum (White rhinoceros), this protein is Pancreatic polypeptide (PPY).